We begin with the raw amino-acid sequence, 481 residues long: ATP synthase subunit beta, chloroplastic (481 aa).

Residue 163-170 (GGAGVGKT) participates in ATP binding.

This sequence belongs to the ATPase alpha/beta chains family. F-type ATPases have 2 components, CF(1) - the catalytic core - and CF(0) - the membrane proton channel. CF(1) has five subunits: alpha(3), beta(3), gamma(1), delta(1), epsilon(1). CF(0) has four main subunits: a(1), b(1), b'(1) and c(9-12).

It localises to the plastid. Its subcellular location is the chloroplast thylakoid membrane. The enzyme catalyses ATP + H2O + 4 H(+)(in) = ADP + phosphate + 5 H(+)(out). Produces ATP from ADP in the presence of a proton gradient across the membrane. The catalytic sites are hosted primarily by the beta subunits. This is ATP synthase subunit beta, chloroplastic from Tupiella akineta (Green alga).